The following is a 671-amino-acid chain: DNA ligase (671 aa).

NAD(+)-binding positions include 32–36 (DVEYD), 81–82 (SL), and E113. Catalysis depends on K115, which acts as the N6-AMP-lysine intermediate. NAD(+)-binding residues include R136, E173, K290, and K314. C408, C411, C426, and C432 together coordinate Zn(2+). One can recognise a BRCT domain in the interval 593–671 (EIDSPFAGKT…EAEMLRLLGS (79 aa)).

The protein belongs to the NAD-dependent DNA ligase family. LigA subfamily. Mg(2+) serves as cofactor. Requires Mn(2+) as cofactor.

It carries out the reaction NAD(+) + (deoxyribonucleotide)n-3'-hydroxyl + 5'-phospho-(deoxyribonucleotide)m = (deoxyribonucleotide)n+m + AMP + beta-nicotinamide D-nucleotide.. DNA ligase that catalyzes the formation of phosphodiester linkages between 5'-phosphoryl and 3'-hydroxyl groups in double-stranded DNA using NAD as a coenzyme and as the energy source for the reaction. It is essential for DNA replication and repair of damaged DNA. The polypeptide is DNA ligase (Escherichia coli O17:K52:H18 (strain UMN026 / ExPEC)).